The following is a 101-amino-acid chain: Small ribosomal subunit protein eS24 (101 aa).

The protein belongs to the eukaryotic ribosomal protein eS24 family.

This chain is Small ribosomal subunit protein eS24, found in Methanosarcina acetivorans (strain ATCC 35395 / DSM 2834 / JCM 12185 / C2A).